A 335-amino-acid chain; its full sequence is Sphingomyelinase C (335 aa).

The signal sequence occupies residues 1–28 (MEKFKIIKTIPKICGAFIFLLFFTFLFG).

This sequence belongs to the neutral sphingomyelinase family.

It localises to the secreted. It catalyses the reaction a sphingomyelin + H2O = phosphocholine + an N-acylsphing-4-enine + H(+). In terms of biological role, virulence factor that promotes intracellular proliferation by mediating the disruption of the phagocytic vacuole and the release of bacteria into the host cell cytosol. May act in concert with the phospholipases PlcA and PlcB and the hemolysin hly to mediate efficient escape from the vacuole. The chain is Sphingomyelinase C (smcL) from Listeria ivanovii.